Consider the following 1483-residue polypeptide: Mediator of RNA polymerase II transcription subunit 26 (1483 aa).

Positions 8–85 constitute a TFIIS N-terminal domain; the sequence is ELTTHLSQAL…KKWREMVGIQ (78 aa). Phosphoserine occurs at positions 204, 258, and 421. Disordered regions lie at residues 227-278, 414-438, 480-518, 541-575, and 989-1041; these read SDSD…GQVA, HEYLESDSPSQIPKRRGRKKGSKGV, VSMQSSASNLSNSSTNRDLPSHTTFPRQTSSCSDTSMNS, TDSDTVTSDPSHDSNKSQEIKECTSLDSNSNSIQS, and DKSS…MKRR. Basic residues predominate over residues 426 to 435; that stretch reads PKRRGRKKGS. The segment covering 480–495 has biased composition (low complexity); sequence VSMQSSASNLSNSSTN. A compositionally biased stretch (polar residues) spans 496 to 518; that stretch reads RDLPSHTTFPRQTSSCSDTSMNS. Threonine 541 is modified (phosphothreonine). The span at 550-564 shows a compositional bias: basic and acidic residues; that stretch reads PSHDSNKSQEIKECT. Serine 551 is subject to Phosphoserine. Polar residues-rich tracts occupy residues 565 to 575 and 989 to 999; these read SLDSNSNSIQS and DKSSNTGCQGN. The span at 1000 to 1011 shows a compositional bias: low complexity; that stretch reads SPYSSSSSSSYS. The span at 1020–1033 shows a compositional bias: polar residues; the sequence is ITKNLQNKNIQLNS. Serine 1177 carries the post-translational modification Phosphoserine. The residue at position 1179 (threonine 1179) is a Phosphothreonine.

Belongs to the Mediator complex subunit 26 family. In terms of assembly, component of the Mediator complex. Interacts with MED6 and MED17.

The protein localises to the nucleus. Functionally, component of the Mediator complex, a coactivator involved in the regulated transcription of nearly all RNA polymerase II-dependent genes. Mediator functions as a bridge to convey information from gene-specific regulatory proteins to the basal RNA polymerase II transcription machinery. Mediator is recruited to promoters by direct interactions with regulatory proteins and serves as a scaffold for the assembly of a functional preinitiation complex with RNA polymerase II and the general transcription factors. Required for activated transcription of the MtnA gene. The sequence is that of Mediator of RNA polymerase II transcription subunit 26 (MED26) from Drosophila melanogaster (Fruit fly).